Consider the following 247-residue polypeptide: Programmed cell death 1 ligand 2 (247 aa).

The signal sequence occupies residues 1–19; the sequence is MLLLLPILNLSLQLHPVAA. The Extracellular segment spans residues 20–221; it reads LFTVTAPKEV…RMEPKVPRTW (202 aa). Residues 21–118 form the Ig-like V-type domain; the sequence is FTVTAPKEVY…AWDYKYLTVK (98 aa). Cystine bridges form between Cys42/Cys102 and Cys143/Cys192. N-linked (GlcNAc...) asparagine glycosylation is found at Asn64, Asn157, Asn163, and Asn189. The Ig-like C2-type domain occupies 122-203; sequence SYMRIDTRIL…FWNAHMKELT (82 aa). The helical transmembrane segment at 222–242 threads the bilayer; it reads PLHVFIPACTIALIFLAIVII. Residues 243 to 247 are Cytoplasmic-facing; the sequence is QRKRI.

This sequence belongs to the immunoglobulin superfamily. BTN/MOG family. As to quaternary structure, interacts with PDCD1. In terms of tissue distribution, expressed in immature and mature bone marrow-derived dendritic cells and splenic dendritic cells. Highly expressed in placenta, liver and weakly expressed in heart, spleen, lymph nodes and thymus. Also expressed in some tumor cell lines of lymphoid origin.

The protein resides in the cell membrane. In terms of biological role, involved in the costimulatory signal essential for T-cell proliferation and IFNG production in a PDCD1-independent manner. Interaction with PDCD1 inhibits T-cell proliferation by blocking cell cycle progression and cytokine production. This chain is Programmed cell death 1 ligand 2 (Pdcd1lg2), found in Mus musculus (Mouse).